Here is an 820-residue protein sequence, read N- to C-terminus: Chitinase A (820 aa).

Positions 1 to 21 are cleaved as a signal peptide; the sequence is MKLNKITSYIGFALLSGGALA. In terms of domain architecture, GH18 spans 158-588; the sequence is RVTGAYFVEW…NAMYDGLTAG (431 aa). Glu-313 acts as the Proton donor in catalysis.

This sequence belongs to the glycosyl hydrolase 18 family. Chitinase class II subfamily.

It catalyses the reaction Random endo-hydrolysis of N-acetyl-beta-D-glucosaminide (1-&gt;4)-beta-linkages in chitin and chitodextrins.. Stimulated by magnesium ions; inhibited by N-bromosuccinimide and 2-hydroxy-5-nitrobenzyl bromide. In Pseudoalteromonas piscicida, this protein is Chitinase A (chiA).